Here is a 262-residue protein sequence, read N- to C-terminus: Global transcriptional regulator CodY (262 aa).

Positions 1–159 (MATLLEKTRK…ATTVIGVQLS (159 aa)) are GAF domain. The segment at residues 207 to 226 (ASVIADKIGITRSVIVNALR) is a DNA-binding region (H-T-H motif).

Belongs to the CodY family.

The protein localises to the cytoplasm. DNA-binding global transcriptional regulator which is involved in the adaptive response to starvation and acts by directly or indirectly controlling the expression of numerous genes in response to nutrient availability. During rapid exponential growth, CodY is highly active and represses genes whose products allow adaptation to nutrient depletion. This Lactococcus lactis subsp. lactis (strain IL1403) (Streptococcus lactis) protein is Global transcriptional regulator CodY.